Consider the following 144-residue polypeptide: Ribosomal RNA large subunit methyltransferase H (144 aa).

Residues glycine 92 and 111-116 (LSPMTF) each bind S-adenosyl-L-methionine.

It belongs to the RNA methyltransferase RlmH family. As to quaternary structure, homodimer.

Its subcellular location is the cytoplasm. It catalyses the reaction pseudouridine(1915) in 23S rRNA + S-adenosyl-L-methionine = N(3)-methylpseudouridine(1915) in 23S rRNA + S-adenosyl-L-homocysteine + H(+). Its function is as follows. Specifically methylates the pseudouridine at position 1915 (m3Psi1915) in 23S rRNA. The chain is Ribosomal RNA large subunit methyltransferase H from Synechococcus sp. (strain CC9311).